The sequence spans 72 residues: Disintegrin batroxostatin (72 aa).

Residues 1–72 form the Disintegrin domain; that stretch reads EAGEECDCGA…SADCPRNRFY (72 aa). Intrachain disulfides connect C6–C21, C8–C16, C15–C38, C29–C35, C34–C59, and C47–C66. The short motif at 51-53 is the Cell attachment site element; that stretch reads RGD. A disordered region spans residues 52-72; the sequence is GDNPDDRCTGQSADCPRNRFY.

The protein belongs to the venom metalloproteinase (M12B) family. P-II subfamily. P-IIa sub-subfamily. In terms of assembly, monomer. As to expression, expressed by the venom gland.

It localises to the secreted. In terms of biological role, inhibits fibrinogen interaction with platelets. Acts by binding to the glycoprotein IIb-IIIa receptor (ITGA2B/ITGB3) on the platelet surface and inhibits aggregation induced by ADP, thrombin, platelet-activating factor and collagen. Also inhibits T24 and SK-Mel-28 cell adhesion to fibronectin with IC(50) of 4.4 uM and 33 nM, respectively. The chain is Disintegrin batroxostatin from Bothrops atrox (Barba amarilla).